The chain runs to 175 residues: Thioredoxin M-type, chloroplastic (175 aa).

Residues 1–62 (MALETCLRGW…ARRPSRFVCK (62 aa)) constitute a chloroplast transit peptide. A Thioredoxin domain is found at 63–174 (CKNVVDEVIV…LCTIIDKYIG (112 aa)). Cysteine 98 and cysteine 101 are disulfide-bonded.

This sequence belongs to the thioredoxin family. Plant M-type subfamily. In terms of assembly, forms a complex with heterodimeric ferredoxin-thioredoxin reductase (FTR) and ferredoxin.

Its subcellular location is the plastid. It localises to the chloroplast. Functionally, participates in various redox reactions through the reversible oxidation of the active center dithiol to a disulfide. The M form is known to activate NADP-malate dehydrogenase. The protein is Thioredoxin M-type, chloroplastic of Triticum aestivum (Wheat).